The sequence spans 216 residues: Cell division protein SepF (216 aa).

The tract at residues 22-126 (EYVEEPDQAR…PVVDDGGPLA (105 aa)) is disordered. 3 stretches are compositionally biased toward basic and acidic residues: residues 28–50 (DQARRAPRRSHDGYAERDDREFV), 62–80 (SRRDEEDAEFDRYDSRPRV), and 106–118 (ARAERPEARRAPV).

This sequence belongs to the SepF family. Homodimer. Interacts with FtsZ.

It is found in the cytoplasm. In terms of biological role, cell division protein that is part of the divisome complex and is recruited early to the Z-ring. Probably stimulates Z-ring formation, perhaps through the cross-linking of FtsZ protofilaments. Its function overlaps with FtsA. This is Cell division protein SepF from Rhodococcus erythropolis (strain PR4 / NBRC 100887).